We begin with the raw amino-acid sequence, 156 residues long: MADHHRGATGGGGGYGDLQRGGGMHGEAQQQQKQGAMMTALKAATAATFGGSMLVLSGLILAGTVIALTVATPVLVIFSPVLVPAAIALALMAAGFVTSGGLGVAALSVFSWMYKYLTGKHPPAADQLDHAKARLASKARDVKDAAQHRIDQAQGS.

Residues 1–30 (MADHHRGATGGGGGYGDLQRGGGMHGEAQQ) are disordered. A2 is subject to N-acetylalanine. The interval 2 to 42 (ADHHRGATGGGGGYGDLQRGGGMHGEAQQQQKQGAMMTALK) is polar. Residues 8-25 (ATGGGGGYGDLQRGGGMH) show a composition bias toward gly residues. Positions 43-114 (AATAATFGGS…AALSVFSWMY (72 aa)) are hydrophobic. A run of 2 helical transmembrane segments spans residues 51-71 (GSMLVLSGLILAGTVIALTVA) and 95-115 (GFVTSGGLGVAALSVFSWMYK).

Belongs to the oleosin family. Post-translationally, the N-terminus is blocked.

It localises to the lipid droplet. Its subcellular location is the membrane. In terms of biological role, may have a structural role to stabilize the lipid body during desiccation of the seed by preventing coalescence of the oil. Probably interacts with both lipid and phospholipid moieties of lipid bodies. May also provide recognition signals for specific lipase anchorage in lipolysis during seedling growth. In Zea mays (Maize), this protein is Oleosin Zm-I (OLE16).